The primary structure comprises 434 residues: MDLLRRVAVVAVLLSLPSRGRSGGGGSDLHPVVLVPGYGSNRLYARLTAAYEPAAPRCGAREGKDEWFQLWPIDAAASEPAQAPCLAEKMSLVYDPVADDYRNVAGVVTRVPSFASTRALVGWDPLVRQLEAMGHRDGGSLFAAPYDFRYAVAPRGHPSAVGERYFARLTRLIERASRLNGGRPAVVVAHSFGCALTYQFLRARPLAWRQRFVKHAVLLAAALGGFAEGMDGLASGAGSGLPNLAPPARARLARSQQSALWRLPTPMVFGDRPVVVTKNSTYSANNITEFLDAIGFTEGVQPYVTRVLPMWRALPAPMVPVTSMYGVGVRTPETFVYGEAGFEGTPEVVYGDGDGNMNIVSLMAAEEWSGVEGQILKVVRLPGVSHVGFFSDLALKKVVAEIQKAVSSIEVHRKEKIFSFLNNFEFTIPVPLGW.

The Acyl-ester intermediate role is filled by Ser191. Catalysis depends on charge relay system residues Asp354 and His386.

It belongs to the AB hydrolase superfamily. Lipase family.

In Oryza sativa subsp. japonica (Rice), this protein is Lecithin-cholesterol acyltransferase-like 1.